The primary structure comprises 370 residues: MDFPASENLFPGPVLGIETSCDETAAAVLDGSGRILAEIVLSQYDDHARFGGVVPEIAARAHLAYLPGMVTEVMDKAGLRFQDLAAIAATSGPGLIGGLLVGAGLGKGLALAAKRPFIAINHLEAHALAALLPALGGVAEITSGEHFPFLLMLLSGGHCQCILVEGVGRYRRLGGTIDDAVGEAFDKVGKLLGLGWPGGPALERLALQGNPHALAFPRPMKGRVGCDFSFSGLKTAVAQYVARFPDGPLPLSDAADIAASFQAAVADVMADRATAALAMADEIAPAKMLVVSGGVAANAAIRAALSTAAEHRGIAMLAPPPRLCTDNAVMVAWAGLHRLKYGAVSGLDHAPLPRWPLDAPDMALPESTTP.

Fe cation contacts are provided by histidine 122 and histidine 126. Residues 153 to 157 (LLSGG), aspartate 186, glycine 199, and asparagine 298 each bind substrate. Residue aspartate 326 coordinates Fe cation.

The protein belongs to the KAE1 / TsaD family. The cofactor is Fe(2+).

It is found in the cytoplasm. The enzyme catalyses L-threonylcarbamoyladenylate + adenosine(37) in tRNA = N(6)-L-threonylcarbamoyladenosine(37) in tRNA + AMP + H(+). Its function is as follows. Required for the formation of a threonylcarbamoyl group on adenosine at position 37 (t(6)A37) in tRNAs that read codons beginning with adenine. Is involved in the transfer of the threonylcarbamoyl moiety of threonylcarbamoyl-AMP (TC-AMP) to the N6 group of A37, together with TsaE and TsaB. TsaD likely plays a direct catalytic role in this reaction. The protein is tRNA N6-adenosine threonylcarbamoyltransferase of Granulibacter bethesdensis (strain ATCC BAA-1260 / CGDNIH1).